The chain runs to 44 residues: Non-structural protein 7b (44 aa).

A helical transmembrane segment spans residues Phe-9–Trp-29.

Its subcellular location is the host membrane. The chain is Non-structural protein 7b from Bat coronavirus HKU3 (BtCoV).